Here is a 139-residue protein sequence, read N- to C-terminus: Endocuticle structural glycoprotein SgAbd-8 (139 aa).

Gln1 is subject to Pyrrolidone carboxylic acid. Thr14 carries O-linked (HexNAc...) threonine glycosylation. Ser15 carries O-linked (HexNAc...) serine glycosylation. The Chitin-binding type R&amp;R domain maps to 29 to 99; sequence DGSYAWSYET…PEGAHLPTPP (71 aa). Thr97 carries an O-linked (HexNAc...) threonine glycan. The tract at residues 111 to 139 is disordered; sequence FIASQPQQPGNNGGGQFPRPQPFPRPGAF. Over residues 129–139 the composition is skewed to pro residues; it reads RPQPFPRPGAF.

Its function is as follows. Component of the abdominal endocuticle. This chain is Endocuticle structural glycoprotein SgAbd-8, found in Schistocerca gregaria (Desert locust).